Consider the following 371-residue polypeptide: Nuclear hormone receptor family member nhr-51 (371 aa).

The nuclear receptor DNA-binding region spans 2 to 77; sequence NKNCLICHRK…MGMQAFPRRV (76 aa). NR C4-type zinc fingers lie at residues 5–25 and 41–60; these read CLIC…CFAC and CQKF…CKAC. Residues 98–337 enclose the NR LBD domain; that stretch reads MDEQRHWRML…KQLVTDTFVD (240 aa).

This sequence belongs to the nuclear hormone receptor family.

It is found in the nucleus. Orphan nuclear receptor. The chain is Nuclear hormone receptor family member nhr-51 (nhr-51) from Caenorhabditis elegans.